The chain runs to 195 residues: Dephospho-CoA kinase (195 aa).

Residues 3-195 (IIGLTGSIAM…FSIIENLLKN (193 aa)) enclose the DPCK domain. 11–16 (AMGKST) is a binding site for ATP.

It belongs to the CoaE family.

The protein resides in the cytoplasm. The catalysed reaction is 3'-dephospho-CoA + ATP = ADP + CoA + H(+). Its pathway is cofactor biosynthesis; coenzyme A biosynthesis; CoA from (R)-pantothenate: step 5/5. Catalyzes the phosphorylation of the 3'-hydroxyl group of dephosphocoenzyme A to form coenzyme A. The polypeptide is Dephospho-CoA kinase (Bartonella quintana (strain Toulouse) (Rochalimaea quintana)).